The following is a 139-amino-acid chain: D-ribose pyranase (139 aa).

Catalysis depends on His-20, which acts as the Proton donor. Substrate-binding positions include Asp-28, His-106, and 128-130 (YAN).

The protein belongs to the RbsD / FucU family. RbsD subfamily. In terms of assembly, homodecamer.

Its subcellular location is the cytoplasm. The enzyme catalyses beta-D-ribopyranose = beta-D-ribofuranose. It functions in the pathway carbohydrate metabolism; D-ribose degradation; D-ribose 5-phosphate from beta-D-ribopyranose: step 1/2. In terms of biological role, catalyzes the interconversion of beta-pyran and beta-furan forms of D-ribose. This is D-ribose pyranase from Aeromonas hydrophila subsp. hydrophila (strain ATCC 7966 / DSM 30187 / BCRC 13018 / CCUG 14551 / JCM 1027 / KCTC 2358 / NCIMB 9240 / NCTC 8049).